Here is a 407-residue protein sequence, read N- to C-terminus: Zinc finger protein 174 (407 aa).

A disordered region spans residues 1–20 (MAAKMEITLSSNTEASSKQE). Residue Lys-26 forms a Glycyl lysine isopeptide (Lys-Gly) (interchain with G-Cter in SUMO2) linkage. Positions 59–124 (GPQEALSQLR…KEIVTLVEDF (66 aa)) constitute an SCAN box domain. Residues 150–270 (GSQLGEQELP…RRQVSSPNAQ (121 aa)) form a disordered region. Lys-204 participates in a covalent cross-link: Glycyl lysine isopeptide (Lys-Gly) (interchain with G-Cter in SUMO2). A compositionally biased stretch (basic and acidic residues) spans 211 to 221 (PRMRSDNKENP). Residues Lys-230 and Lys-271 each participate in a glycyl lysine isopeptide (Lys-Gly) (interchain with G-Cter in SUMO2) cross-link. 3 C2H2-type zinc fingers span residues 326 to 348 (YKCDDCGKSFTWNSELKRHKRVH), 354 to 376 (YTCGECGNCFGRQSTLKLHQRIH), and 382 to 405 (YQCGQCGKSFRQSSNLHQHHRLHH).

This sequence belongs to the krueppel C2H2-type zinc-finger protein family. In terms of assembly, homodimer. As to expression, expressed in a variety of organs, but most strongly in adult testis and ovary followed by small intestine, colon, prostate, thymus, spleen, pancreas, skeletal muscle, heart, brain and kidney. Also expressed in umbilical vein endothelial cells, foreskin fibroblast and Hep-G2 cells.

Its subcellular location is the nucleus. Transcriptional repressor. The protein is Zinc finger protein 174 (ZNF174) of Homo sapiens (Human).